The following is a 202-amino-acid chain: MIAYVEGRVAEISGNACVVVTEGGVGYEVHLPAHTLSRLPERGGQVAFHVRTEVREDALELFGFSTWDERQTFMVLTTISKVGARTALAILSQFRPDDLRRLVVEDDVLALTRVSGIGKKTAQHIFLELKYKLKVEDLPAGLVLAGGAAPGGVFRDALAGLGNLGYLEDEAAPVLKEVLKAEPDLDVAGALRAALKALARGR.

Residues 1–65 form a domain I region; it reads MIAYVEGRVA…EDALELFGFS (65 aa). The tract at residues 66–144 is domain II; it reads TWDERQTFMV…VEDLPAGLVL (79 aa). Residues 145–155 form a flexible linker region; the sequence is AGGAAPGGVFR. Positions 155–202 are domain III; it reads RDALAGLGNLGYLEDEAAPVLKEVLKAEPDLDVAGALRAALKALARGR.

Belongs to the RuvA family. Homotetramer. Forms an RuvA(8)-RuvB(12)-Holliday junction (HJ) complex. HJ DNA is sandwiched between 2 RuvA tetramers; dsDNA enters through RuvA and exits via RuvB. An RuvB hexamer assembles on each DNA strand where it exits the tetramer. Each RuvB hexamer is contacted by two RuvA subunits (via domain III) on 2 adjacent RuvB subunits; this complex drives branch migration. In the full resolvosome a probable DNA-RuvA(4)-RuvB(12)-RuvC(2) complex forms which resolves the HJ.

It is found in the cytoplasm. Functionally, the RuvA-RuvB-RuvC complex processes Holliday junction (HJ) DNA during genetic recombination and DNA repair, while the RuvA-RuvB complex plays an important role in the rescue of blocked DNA replication forks via replication fork reversal (RFR). RuvA specifically binds to HJ cruciform DNA, conferring on it an open structure. The RuvB hexamer acts as an ATP-dependent pump, pulling dsDNA into and through the RuvAB complex. HJ branch migration allows RuvC to scan DNA until it finds its consensus sequence, where it cleaves and resolves the cruciform DNA. This is Holliday junction branch migration complex subunit RuvA from Nitratidesulfovibrio vulgaris (strain DSM 19637 / Miyazaki F) (Desulfovibrio vulgaris).